The chain runs to 142 residues: Large ribosomal subunit protein uL13 (142 aa).

Belongs to the universal ribosomal protein uL13 family. Part of the 50S ribosomal subunit.

Its function is as follows. This protein is one of the early assembly proteins of the 50S ribosomal subunit, although it is not seen to bind rRNA by itself. It is important during the early stages of 50S assembly. The sequence is that of Large ribosomal subunit protein uL13 from Pasteurella multocida (strain Pm70).